A 140-amino-acid chain; its full sequence is 6,7-dimethyl-8-ribityllumazine synthase (140 aa).

5-amino-6-(D-ribitylamino)uracil is bound by residues Phe-11, 42–44 (ALE), and 66–68 (VVI). A (2S)-2-hydroxy-3-oxobutyl phosphate-binding site is contributed by 71–72 (ET). The active-site Proton donor is His-74. Asn-98 serves as a coordination point for 5-amino-6-(D-ribitylamino)uracil. Arg-112 contributes to the (2S)-2-hydroxy-3-oxobutyl phosphate binding site.

Belongs to the DMRL synthase family.

The enzyme catalyses (2S)-2-hydroxy-3-oxobutyl phosphate + 5-amino-6-(D-ribitylamino)uracil = 6,7-dimethyl-8-(1-D-ribityl)lumazine + phosphate + 2 H2O + H(+). It functions in the pathway cofactor biosynthesis; riboflavin biosynthesis; riboflavin from 2-hydroxy-3-oxobutyl phosphate and 5-amino-6-(D-ribitylamino)uracil: step 1/2. Its function is as follows. Catalyzes the formation of 6,7-dimethyl-8-ribityllumazine by condensation of 5-amino-6-(D-ribitylamino)uracil with 3,4-dihydroxy-2-butanone 4-phosphate. This is the penultimate step in the biosynthesis of riboflavin. This Erythrobacter litoralis (strain HTCC2594) protein is 6,7-dimethyl-8-ribityllumazine synthase.